Reading from the N-terminus, the 430-residue chain is Cytochrome c biogenesis protein CcsB (430 aa).

Transmembrane regions (helical) follow at residues 14–34 (LRLA…GTIL), 72–92 (SVWF…CSWR), and 162–182 (VGPL…AWGA).

Belongs to the Ccs1/CcsB family. As to quaternary structure, may interact with CcsA.

It localises to the cellular thylakoid membrane. In terms of biological role, required during biogenesis of c-type cytochromes (cytochrome c6 and cytochrome f) at the step of heme attachment. The protein is Cytochrome c biogenesis protein CcsB of Synechococcus sp. (strain WH7803).